We begin with the raw amino-acid sequence, 348 residues long: MIEADRLIAASGRDREEVQDRAIRPLSLDEYIGQPVVREQMALFIQAARGRGESLDHTLIFGPPGLGKTTLANIIAHEMGVSVKSTSGPILERPGDLAAMLTNLEPHDVLFIDEIHRLSPVVEEVLYPAMEDFQLDIMIGEGPAARSIKLDLPPFTLVGATTRAGMLTNPLRDRFGIVQRLEFYNDKDLSTIVSRSANILGLAIEDQGAYEIARRARGTPRIANRLLRRVRDYAEVRGKGQITKAVADMALNLLDVDERGFDHSDRRLLLTMIEKFDGGPVGVDNLAAAISEERHTIEDVLEPYLIQQGYIMRTPRGRVVTRHAYLHFGLNIPGRLGEGGDFSEPGDE.

Residues 4-184 (ADRLIAASGR…FGIVQRLEFY (181 aa)) are large ATPase domain (RuvB-L). Residues isoleucine 23, arginine 24, glycine 65, lysine 68, threonine 69, threonine 70, 131-133 (EDF), arginine 174, tyrosine 184, and arginine 221 each bind ATP. Threonine 69 is a Mg(2+) binding site. The small ATPAse domain (RuvB-S) stretch occupies residues 185–255 (NDKDLSTIVS…VADMALNLLD (71 aa)). Residues 258–348 (ERGFDHSDRR…GGDFSEPGDE (91 aa)) form a head domain (RuvB-H) region. DNA is bound by residues arginine 294, arginine 313, and arginine 318.

It belongs to the RuvB family. In terms of assembly, homohexamer. Forms an RuvA(8)-RuvB(12)-Holliday junction (HJ) complex. HJ DNA is sandwiched between 2 RuvA tetramers; dsDNA enters through RuvA and exits via RuvB. An RuvB hexamer assembles on each DNA strand where it exits the tetramer. Each RuvB hexamer is contacted by two RuvA subunits (via domain III) on 2 adjacent RuvB subunits; this complex drives branch migration. In the full resolvosome a probable DNA-RuvA(4)-RuvB(12)-RuvC(2) complex forms which resolves the HJ.

Its subcellular location is the cytoplasm. It catalyses the reaction ATP + H2O = ADP + phosphate + H(+). In terms of biological role, the RuvA-RuvB-RuvC complex processes Holliday junction (HJ) DNA during genetic recombination and DNA repair, while the RuvA-RuvB complex plays an important role in the rescue of blocked DNA replication forks via replication fork reversal (RFR). RuvA specifically binds to HJ cruciform DNA, conferring on it an open structure. The RuvB hexamer acts as an ATP-dependent pump, pulling dsDNA into and through the RuvAB complex. RuvB forms 2 homohexamers on either side of HJ DNA bound by 1 or 2 RuvA tetramers; 4 subunits per hexamer contact DNA at a time. Coordinated motions by a converter formed by DNA-disengaged RuvB subunits stimulates ATP hydrolysis and nucleotide exchange. Immobilization of the converter enables RuvB to convert the ATP-contained energy into a lever motion, pulling 2 nucleotides of DNA out of the RuvA tetramer per ATP hydrolyzed, thus driving DNA branch migration. The RuvB motors rotate together with the DNA substrate, which together with the progressing nucleotide cycle form the mechanistic basis for DNA recombination by continuous HJ branch migration. Branch migration allows RuvC to scan DNA until it finds its consensus sequence, where it cleaves and resolves cruciform DNA. In Pseudomonas putida (strain ATCC 47054 / DSM 6125 / CFBP 8728 / NCIMB 11950 / KT2440), this protein is Holliday junction branch migration complex subunit RuvB.